A 392-amino-acid polypeptide reads, in one-letter code: MITLITEQLQKQTLDELKCTRFSISLPLPDHADISNCGNSFQLVSEGASWRGLPHCSCAEFQDSLNFSYHPSGLSLHLRPPSRGNSPKEQPFSQVLRPEPPDPEKLPVPPAPPSKRHCRSLSVPVDLSRWQPVWRPAPSKLWTPIKHRGSGGGGGPQVPHQSPPKRVSSLRFLQAPSASSQCAPAHRPYSPPFFSLALAQDSSRPCAASPQSGSWESDAESLSPCPPQRRFSLSPSLGPQASRFLPSARSSPASSPELPWRPRGLRNLPRSRSQPCDLDARKTGVKRRHEEDPRRLRPSLDFDKMNQKPYSGGLCLQETAREGSSISPPWFMACSPPPLSASCSPTGGSSQVLSESEEEEEGAVRWGRQALSKRTLCQRDFGDLDLNLIEEN.

Position 1 is an N-acetylmethionine (Met1). The disordered stretch occupies residues 78–119; sequence LRPPSRGNSPKEQPFSQVLRPEPPDPEKLPVPPAPPSKRHCR. Polar residues predominate over residues 83-93; it reads RGNSPKEQPFS. Ser122, Ser162, Ser232, Ser234, Ser255, and Ser273 each carry phosphoserine. Disordered regions lie at residues 141 to 167 and 204 to 294; these read LWTP…PKRV and RPCA…EDPR. A compositionally biased stretch (low complexity) spans 241 to 256; it reads ASRFLPSARSSPASSP. Residues 278 to 294 show a composition bias toward basic and acidic residues; sequence LDARKTGVKRRHEEDPR. Phosphoserine is present on Ser299. A disordered region spans residues 341–364; that stretch reads ASCSPTGGSSQVLSESEEEEEGAV.

Belongs to the FAM53 family.

This is Protein FAM53C from Homo sapiens (Human).